The primary structure comprises 763 residues: 5-methyltetrahydropteroyltriglutamate--homocysteine methyltransferase (763 aa).

5-methyltetrahydropteroyltri-L-glutamate contacts are provided by residues 16-19 (RELK) and Lys-117. Residues 438–440 (IGS) and Glu-491 each bind L-homocysteine. L-methionine contacts are provided by residues 438 to 440 (IGS) and Glu-491. 5-methyltetrahydropteroyltri-L-glutamate contacts are provided by residues 522–523 (RC) and Trp-568. Asp-606 contacts L-homocysteine. Asp-606 is an L-methionine binding site. A 5-methyltetrahydropteroyltri-L-glutamate-binding site is contributed by Glu-612. Zn(2+)-binding residues include His-648, Cys-650, and Glu-672. The active-site Proton donor is His-701. Cys-733 serves as a coordination point for Zn(2+).

This sequence belongs to the vitamin-B12 independent methionine synthase family. Zn(2+) is required as a cofactor.

It carries out the reaction 5-methyltetrahydropteroyltri-L-glutamate + L-homocysteine = tetrahydropteroyltri-L-glutamate + L-methionine. It functions in the pathway amino-acid biosynthesis; L-methionine biosynthesis via de novo pathway; L-methionine from L-homocysteine (MetE route): step 1/1. Functionally, catalyzes the transfer of a methyl group from 5-methyltetrahydrofolate to homocysteine resulting in methionine formation. The polypeptide is 5-methyltetrahydropteroyltriglutamate--homocysteine methyltransferase (Pseudomonas paraeruginosa (strain DSM 24068 / PA7) (Pseudomonas aeruginosa (strain PA7))).